Here is a 161-residue protein sequence, read N- to C-terminus: Large ribosomal subunit protein uL15 (161 aa).

The interval 1–43 (MKLSDIADNAGSRKKRMRIGRGIGSGKGKTGGRGGKGQTARSG) is disordered. Residues 21 to 37 (RGIGSGKGKTGGRGGKG) are compositionally biased toward gly residues.

This sequence belongs to the universal ribosomal protein uL15 family. As to quaternary structure, part of the 50S ribosomal subunit.

Functionally, binds to the 23S rRNA. The sequence is that of Large ribosomal subunit protein uL15 from Nitrobacter hamburgensis (strain DSM 10229 / NCIMB 13809 / X14).